Here is a 356-residue protein sequence, read N- to C-terminus: Chorismate synthase (356 aa).

Arg-46 serves as a coordination point for NADP(+). FMN contacts are provided by residues 122-124 (RSS), 234-235 (NG), Gly-274, 289-293 (KPTPS), and Arg-315.

Belongs to the chorismate synthase family. Homotetramer. The cofactor is FMNH2.

It catalyses the reaction 5-O-(1-carboxyvinyl)-3-phosphoshikimate = chorismate + phosphate. It functions in the pathway metabolic intermediate biosynthesis; chorismate biosynthesis; chorismate from D-erythrose 4-phosphate and phosphoenolpyruvate: step 7/7. Its function is as follows. Catalyzes the anti-1,4-elimination of the C-3 phosphate and the C-6 proR hydrogen from 5-enolpyruvylshikimate-3-phosphate (EPSP) to yield chorismate, which is the branch point compound that serves as the starting substrate for the three terminal pathways of aromatic amino acid biosynthesis. This reaction introduces a second double bond into the aromatic ring system. The sequence is that of Chorismate synthase from Campylobacter fetus subsp. fetus (strain 82-40).